Consider the following 418-residue polypeptide: Histidine--tRNA ligase (418 aa).

Belongs to the class-II aminoacyl-tRNA synthetase family. Homodimer.

It is found in the cytoplasm. It catalyses the reaction tRNA(His) + L-histidine + ATP = L-histidyl-tRNA(His) + AMP + diphosphate + H(+). The sequence is that of Histidine--tRNA ligase from Thermoanaerobacter sp. (strain X514).